We begin with the raw amino-acid sequence, 1391 residues long: Leucine-rich PPR motif-containing protein, mitochondrial (1391 aa).

Residues 1-42 (MSALLAGARFLLRPGLRALPAPCVRLSPGQGRYLNNTPGHFA) constitute a mitochondrion transit peptide. PPR repeat units lie at residues 110–144 (LLRS…GAVF), 145–179 (DVSH…NVQP), 180–214 (NRVT…DLPI), 215–249 (TEAV…GIEP), 250–284 (GPET…EGSL), 389–425 (NLHS…GMPV), 704–738 (AIGT…DSSA), 741–775 (DTSK…DVPL), 779–813 (TTTS…GLAK), 815–850 (TSNL…NCMP), 948–982 (RDDM…NVIP), 1028–1062 (PESS…GTAM), 1063–1093 (SASA…AENH), 1100–1134 (NDAA…DKVP), and 1310–1344 (RETA…SVSP). Positions 1118 to 1387 (KDALASLKAM…KLKKDKADSY (270 aa)) are RNA-binding.

It localises to the mitochondrion. Its subcellular location is the nucleus. In terms of biological role, may play a role in RNA metabolism in both nuclei and mitochondria. May bind mature mRNA in the nucleus outer membrane. In mitochondria binds to poly(A) mRNA. May be involved in transcription regulation. Binds single-stranded DNA. The chain is Leucine-rich PPR motif-containing protein, mitochondrial (lrpprc) from Xenopus tropicalis (Western clawed frog).